Here is a 147-residue protein sequence, read N- to C-terminus: Large ribosomal subunit protein bL9 (147 aa).

The protein belongs to the bacterial ribosomal protein bL9 family.

Binds to the 23S rRNA. In Campylobacter jejuni subsp. jejuni serotype O:6 (strain 81116 / NCTC 11828), this protein is Large ribosomal subunit protein bL9.